The following is a 244-amino-acid chain: Putative membrane peptidase YdiL (244 aa).

A run of 6 helical transmembrane segments spans residues 7–27, 44–64, 80–100, 127–147, 159–179, and 202–222; these read FIIL…PLLF, AQGL…LLIL, IGLS…SQGI, AVPL…EIIF, TNFF…HADL, and IWVP…MQLE. Residues glutamate 143 and histidine 176 each act as proton donor/acceptor in the active site.

Belongs to the peptidase U48 family.

The protein localises to the cell membrane. In terms of biological role, may function as endopeptidase which proteolytically removes the C-terminal three residues of farnesylated peptides containing the CAAX motif where C is cysteine, A is an aliphatic amino acid and X is any amino acid. The polypeptide is Putative membrane peptidase YdiL (ydiL) (Bacillus subtilis (strain 168)).